The following is a 115-amino-acid chain: NADH-ubiquinone oxidoreductase chain 3 (115 aa).

The next 3 helical transmembrane spans lie at 3-23, 55-75, and 87-107; these read LMLT…IAFW, FFLV…LLPL, and VLFM…YEWI.

The protein belongs to the complex I subunit 3 family. As to quaternary structure, core subunit of respiratory chain NADH dehydrogenase (Complex I) which is composed of 45 different subunits. Interacts with TMEM186. Interacts with TMEM242.

It is found in the mitochondrion inner membrane. It catalyses the reaction a ubiquinone + NADH + 5 H(+)(in) = a ubiquinol + NAD(+) + 4 H(+)(out). In terms of biological role, core subunit of the mitochondrial membrane respiratory chain NADH dehydrogenase (Complex I) which catalyzes electron transfer from NADH through the respiratory chain, using ubiquinone as an electron acceptor. Essential for the catalytic activity of complex I. The protein is NADH-ubiquinone oxidoreductase chain 3 of Dugong dugon (Dugong).